The sequence spans 207 residues: ATP-dependent Clp protease proteolytic subunit (207 aa).

Ser111 serves as the catalytic Nucleophile. His136 is an active-site residue.

The protein belongs to the peptidase S14 family. As to quaternary structure, fourteen ClpP subunits assemble into 2 heptameric rings which stack back to back to give a disk-like structure with a central cavity, resembling the structure of eukaryotic proteasomes.

The protein resides in the cytoplasm. It catalyses the reaction Hydrolysis of proteins to small peptides in the presence of ATP and magnesium. alpha-casein is the usual test substrate. In the absence of ATP, only oligopeptides shorter than five residues are hydrolyzed (such as succinyl-Leu-Tyr-|-NHMec, and Leu-Tyr-Leu-|-Tyr-Trp, in which cleavage of the -Tyr-|-Leu- and -Tyr-|-Trp bonds also occurs).. Functionally, cleaves peptides in various proteins in a process that requires ATP hydrolysis. Has a chymotrypsin-like activity. Plays a major role in the degradation of misfolded proteins. This chain is ATP-dependent Clp protease proteolytic subunit, found in Photorhabdus laumondii subsp. laumondii (strain DSM 15139 / CIP 105565 / TT01) (Photorhabdus luminescens subsp. laumondii).